The chain runs to 95 residues: ESAT-6-like protein EsxH (95 aa).

The protein belongs to the WXG100 family. ESAT-6 subfamily. Forms a tight 1:1 complex with EsxG.

The protein localises to the secreted. This is ESAT-6-like protein EsxH from Mycolicibacterium smegmatis (strain ATCC 700084 / mc(2)155) (Mycobacterium smegmatis).